Consider the following 116-residue polypeptide: Large ribosomal subunit protein bL17 (116 aa).

This sequence belongs to the bacterial ribosomal protein bL17 family. Part of the 50S ribosomal subunit. Contacts protein L32.

In Helicobacter acinonychis (strain Sheeba), this protein is Large ribosomal subunit protein bL17.